A 248-amino-acid polypeptide reads, in one-letter code: Sperm-specific protein Don juan (248 aa).

A coiled-coil region spans residues 82-147 (KEGNQDELEN…EKKTKCAKKD (66 aa)). Residues 146 to 200 (KDPCKKKDPCKKKDPCKKKDPCKKKDPCKKKDPCKKKDPCKKKDPCKKKGGDLKK) are disordered. A run of 8 repeats spans residues 147-152 (DPCKKK), 153-158 (DPCKKK), 159-164 (DPCKKK), 165-170 (DPCKKK), 171-176 (DPCKKK), 177-182 (DPCKKK), 183-188 (DPCKKK), and 189-194 (DPCKKK). Residues 147-194 (DPCKKKDPCKKKDPCKKKDPCKKKDPCKKKDPCKKKDPCKKKDPCKKK) are 8 X 6 AA tandem repeat of D-P-C-K-K-K. A coiled-coil region spans residues 197–244 (DLKKKCKKLAEKEKCKKLAKKEKMKKLQKKCKKMAQKEKCKKMAKKDK).

In terms of tissue distribution, expression limited to post-meiotic male germ cells. Expressed in elongated spermatids during individualization and in finally elongated nuclei of spermatids. After completion of nuclear shaping it is no longer expressed in the sperm heads with the onset of individualization.

Its subcellular location is the nucleus. It localises to the mitochondrion. Its function is as follows. May be involved in the final steps of mitochondrial differentiation within the flagellum. The protein is Sperm-specific protein Don juan (dj) of Drosophila melanogaster (Fruit fly).